We begin with the raw amino-acid sequence, 394 residues long: Myb-related protein 2 (394 aa).

The region spanning 42 to 102 (TDAKPRLKWT…HLQKYRLSKN (61 aa)) is the HTH myb-type domain. The segment at residues 73–98 (PKTIMKVMGIPGLTLYHLKSHLQKYR) is a DNA-binding region (H-T-H motif). Positions 148–168 (GEALQMQIEVQRRLHEQLEVQ) are coiled coil. The LHEQLE motif lies at 161–166 (LHEQLE). Residues 338-363 (LHGHKSQHQQGNNEDHKLETRNRKGM) form a disordered region. Residues 350-363 (NEDHKLETRNRKGM) are compositionally biased toward basic and acidic residues.

Belongs to the MYB-CC family. In terms of assembly, isoform 1: Homodimer. Isoform 3: Does not form homodimer. As to expression, expressed in phloem and/or cambium.

The protein localises to the nucleus. In terms of biological role, transcriptional activator that may activate the transcription of specific genes involved in nitrogen uptake or assimilation. Acts redundantly with MYR1 as a repressor of flowering and organ elongation under decreased light intensity. Represses gibberellic acid (GA)-dependent responses and affects levels of bioactive GA. In Arabidopsis thaliana (Mouse-ear cress), this protein is Myb-related protein 2.